The following is a 311-amino-acid chain: Ornithine carbamoyltransferase (311 aa).

Carbamoyl phosphate-binding positions include 54-57, glutamine 81, arginine 105, and 132-135; these read STRT and HPCQ. L-ornithine contacts are provided by residues asparagine 163, aspartate 221, and 225-226; that span reads SM. Carbamoyl phosphate contacts are provided by residues 261–262 and arginine 289; that span reads CL.

The protein belongs to the aspartate/ornithine carbamoyltransferase superfamily. OTCase family.

Its subcellular location is the cytoplasm. The catalysed reaction is carbamoyl phosphate + L-ornithine = L-citrulline + phosphate + H(+). It participates in amino-acid degradation; L-arginine degradation via ADI pathway; carbamoyl phosphate from L-arginine: step 2/2. Reversibly catalyzes the transfer of the carbamoyl group from carbamoyl phosphate (CP) to the N(epsilon) atom of ornithine (ORN) to produce L-citrulline. This chain is Ornithine carbamoyltransferase, found in Azoarcus sp. (strain BH72).